Here is a 96-residue protein sequence, read N- to C-terminus: Small ribosomal subunit protein bS6 (96 aa).

Belongs to the bacterial ribosomal protein bS6 family.

Binds together with bS18 to 16S ribosomal RNA. In Beutenbergia cavernae (strain ATCC BAA-8 / DSM 12333 / CCUG 43141 / JCM 11478 / NBRC 16432 / NCIMB 13614 / HKI 0122), this protein is Small ribosomal subunit protein bS6.